A 304-amino-acid chain; its full sequence is MAAFSVHILGCGSALPTTHHHPSSQVIDLRDKLYMIDCGEGVQRQFRHEKLHFGRLIHIFISHLHGDHCFGLPGFISTLGLLGRTGTLHVHGPEGIERFLSPILEQFCHRMPYQVEIHTIDASRHALVHEDKSVKVYSIPLSHRIPAVGYLFEEKCRARHLNKAAAEFYNIPLAEYPLIIEGSDYTTPDGRIIPNRHLTTPGTPPRRYAYCSDTEFCPSIVPIIQGVDLLYHEATFMEEDRARAKETFHSTAKEAAEIARQAGAKRLLIGHYSGRYKDVQGLLEEAQSVFKPTIAANERMRIDL.

H63, H65, D67, H68, H143, D213, and H271 together coordinate Zn(2+). D67 functions as the Proton acceptor in the catalytic mechanism.

The protein belongs to the RNase Z family. In terms of assembly, homodimer. The cofactor is Zn(2+).

It catalyses the reaction Endonucleolytic cleavage of RNA, removing extra 3' nucleotides from tRNA precursor, generating 3' termini of tRNAs. A 3'-hydroxy group is left at the tRNA terminus and a 5'-phosphoryl group is left at the trailer molecule.. Its function is as follows. Zinc phosphodiesterase, which displays some tRNA 3'-processing endonuclease activity. Probably involved in tRNA maturation, by removing a 3'-trailer from precursor tRNA. This is Ribonuclease Z from Porphyromonas gingivalis (strain ATCC BAA-308 / W83).